A 345-amino-acid polypeptide reads, in one-letter code: uncharacterized protein (345 aa).

Polar residues predominate over residues 1–13 (MSKPNTETISVNI). The interval 1–23 (MSKPNTETISVNIPESEGVPLPD) is disordered. Residues 283–316 (SLKQRTNILKKQGETLKKNVEDINKDTSNLKRHA) are a coiled coil.

It is found in the virion. This is an uncharacterized protein from Acanthamoeba polyphaga mimivirus (APMV).